The following is a 357-amino-acid chain: S-adenosylmethionine:tRNA ribosyltransferase-isomerase (357 aa).

This sequence belongs to the QueA family. As to quaternary structure, monomer.

It localises to the cytoplasm. The catalysed reaction is 7-aminomethyl-7-carbaguanosine(34) in tRNA + S-adenosyl-L-methionine = epoxyqueuosine(34) in tRNA + adenine + L-methionine + 2 H(+). Its pathway is tRNA modification; tRNA-queuosine biosynthesis. Transfers and isomerizes the ribose moiety from AdoMet to the 7-aminomethyl group of 7-deazaguanine (preQ1-tRNA) to give epoxyqueuosine (oQ-tRNA). The polypeptide is S-adenosylmethionine:tRNA ribosyltransferase-isomerase (Proteus mirabilis (strain HI4320)).